The primary structure comprises 454 residues: MAAFARMVKGQVRNYSAPLDMAIPASKQKYIPSSGSYPKGFLVSGTHVGVKASNTRFPDLALISSETPCSAAAVFTTNKFQAAPVQVSKKTLQERQGQGIRSVVINSGCANAVTGKGGYEDAVNMGKKVDECEGLSKPSTLVMSTGVIGQRLPISKILDKIPTAYANLASTHEAWLTTARAICTTDTFPKLLSRTFTLPSSPGHTYSLAGMTKGAGMIHPNMATLLGVLCTDAPIAPSALQSLLKYAVSRSFNSISVDGDTSTNDTIAVLANGAAGGAPINSASSDDYAAMQEILTSFAQSLSQLVVRDGEGATKFVTVRVQNSPDYDSARLIASTIARSPLVKTALYGRDANWGRILCAIGYTQGVAPGTVVPERTSVSFKPVDGSAVLKLLVNGEPEQVDEERASAILQEEDLEIVVDLGGGEKGELGGEEAVYWFCDFSHEYVTINGDYRT.

Residues Thr184, Lys213, Thr224, Glu311, Asn449, and Thr454 each contribute to the substrate site. Residue Thr224 is the Nucleophile of the active site.

This sequence belongs to the ArgJ family. As to quaternary structure, heterodimer of an alpha and a beta chain. Post-translationally, the alpha and beta chains are autoproteolytically processed from a single precursor protein within the mitochondrion.

The protein resides in the mitochondrion matrix. The catalysed reaction is N(2)-acetyl-L-ornithine + L-glutamate = N-acetyl-L-glutamate + L-ornithine. It carries out the reaction L-glutamate + acetyl-CoA = N-acetyl-L-glutamate + CoA + H(+). It functions in the pathway amino-acid biosynthesis; L-arginine biosynthesis; L-ornithine and N-acetyl-L-glutamate from L-glutamate and N(2)-acetyl-L-ornithine (cyclic): step 1/1. Its pathway is amino-acid biosynthesis; L-arginine biosynthesis; N(2)-acetyl-L-ornithine from L-glutamate: step 1/4. Functionally, catalyzes two activities which are involved in the cyclic version of arginine biosynthesis: the synthesis of acetylglutamate from glutamate and acetyl-CoA, and of ornithine by transacetylation between acetylornithine and glutamate. The protein is Arginine biosynthesis bifunctional protein ArgJ, mitochondrial of Aspergillus clavatus (strain ATCC 1007 / CBS 513.65 / DSM 816 / NCTC 3887 / NRRL 1 / QM 1276 / 107).